The following is a 226-amino-acid chain: Ribose-5-phosphate isomerase A (226 aa).

Residues 26–29 (TGST), 82–85 (DGAD), and 95–98 (KGGG) contribute to the substrate site. Glutamate 104 serves as the catalytic Proton acceptor. Lysine 122 serves as a coordination point for substrate.

The protein belongs to the ribose 5-phosphate isomerase family. In terms of assembly, homodimer.

The enzyme catalyses aldehydo-D-ribose 5-phosphate = D-ribulose 5-phosphate. It participates in carbohydrate degradation; pentose phosphate pathway; D-ribose 5-phosphate from D-ribulose 5-phosphate (non-oxidative stage): step 1/1. Its function is as follows. Catalyzes the reversible conversion of ribose-5-phosphate to ribulose 5-phosphate. This Streptococcus uberis (strain ATCC BAA-854 / 0140J) protein is Ribose-5-phosphate isomerase A.